We begin with the raw amino-acid sequence, 561 residues long: Nephronectin (561 aa).

Residues 1–19 (MAVLLAAVLASSLYLQVAA) form the signal peptide. The region spanning 52–87 (SWGQCQPVCQPQCKHGECVGPNKCKCHPGFAGKTCN) is the EGF-like 1 domain. 6 cysteine pairs are disulfide-bonded: cysteine 56–cysteine 69, cysteine 60–cysteine 75, cysteine 77–cysteine 86, cysteine 93–cysteine 104, cysteine 100–cysteine 113, and cysteine 115–cysteine 127. Positions 89–128 (DLNECGLKPRPCKHRCMNTFGSYKCYCLNGYMLLPDGSCS) constitute an EGF-like 2; calcium-binding domain. The EGF-like 3 domain maps to 132–168 (SCSMANCQYGCDVVKGQVRCQCPSPGLQLAPDGRTCV). The 45-residue stretch at 169-213 (DIDECATGRVSCPRFRQCVNTFGSYICKCHTGFDLMYIGGKYQCH) folds into the EGF-like 4; calcium-binding domain. 6 cysteine pairs are disulfide-bonded: cysteine 173-cysteine 186, cysteine 180-cysteine 195, cysteine 197-cysteine 212, cysteine 218-cysteine 231, cysteine 225-cysteine 240, and cysteine 242-cysteine 253. The EGF-like 5; calcium-binding domain maps to 214–254 (DIDECSLGQHQCSSYARCYNIHGSYKCQCRDGYEGDGLNCV). The tract at residues 266-370 (PIHMPERNGT…TSTTTRVITV (105 aa)) is disordered. Over residues 307 to 316 (TNRPTSKPTT) the composition is skewed to low complexity. Over residues 317–348 (RPTPNPTPQPTPPPPPPLPTEPRTTPLPPTPE) the composition is skewed to pro residues. Residues 352–366 (TRPTTIAPATSTTTR) show a composition bias toward low complexity. Residues 382 to 384 (RGD) carry the Integrin interaction motif. Residues 420–561 (HSCNFDHGLC…DDVSLKRGRC (142 aa)) enclose the MAM domain.

The protein belongs to the nephronectin family. As to quaternary structure, homodimer and homotrimer. Expressed in kidney (at protein level).

The protein resides in the secreted. Its subcellular location is the extracellular space. It is found in the extracellular matrix. In terms of biological role, functional ligand of integrin alpha-8/beta-1 in kidney development. Regulates the expression of GDNF with integrin alpha-8/beta-1 which is essential for kidney development. May also play a role in the development and function of various tissues, regulating cell adhesion, spreading and survival through the binding of several integrins. The chain is Nephronectin (Npnt) from Mus musculus (Mouse).